We begin with the raw amino-acid sequence, 880 residues long: Valine--tRNA ligase (880 aa).

The 'HIGH' region motif lies at 51 to 61; that stretch reads PNVTGELHLGH. The 'KMSKS' region signature appears at 529–533; sequence KMSKT. Residue Lys-532 participates in ATP binding. A coiled-coil region spans residues 815–854; sequence MSTMVDLEVEAKRVKAEISELEIQIERLSTRLSDEQFLAK.

The protein belongs to the class-I aminoacyl-tRNA synthetase family. ValS type 1 subfamily. In terms of assembly, monomer.

The protein resides in the cytoplasm. It carries out the reaction tRNA(Val) + L-valine + ATP = L-valyl-tRNA(Val) + AMP + diphosphate. Its function is as follows. Catalyzes the attachment of valine to tRNA(Val). As ValRS can inadvertently accommodate and process structurally similar amino acids such as threonine, to avoid such errors, it has a 'posttransfer' editing activity that hydrolyzes mischarged Thr-tRNA(Val) in a tRNA-dependent manner. The chain is Valine--tRNA ligase from Dehalococcoides mccartyi (strain CBDB1).